Consider the following 184-residue polypeptide: Photosystem I assembly protein Ycf4 (184 aa).

2 helical membrane passes run 22-42 (FCWAVILFLGSLGFLLVGTSS) and 57-77 (IVFFPQGIVMSFYGIAGLFIS).

It belongs to the Ycf4 family.

It is found in the plastid. It localises to the chloroplast thylakoid membrane. Its function is as follows. Seems to be required for the assembly of the photosystem I complex. The polypeptide is Photosystem I assembly protein Ycf4 (Lactuca sativa (Garden lettuce)).